A 430-amino-acid chain; its full sequence is uncharacterized protein (430 aa).

2 helical membrane-spanning segments follow: residues Tyr20–Pro40 and Tyr405–Ile425.

The protein resides in the membrane. This is an uncharacterized protein from Schizosaccharomyces pombe (strain 972 / ATCC 24843) (Fission yeast).